A 465-amino-acid polypeptide reads, in one-letter code: Argininosuccinate lyase (465 aa).

This sequence belongs to the lyase 1 family. Argininosuccinate lyase subfamily.

The protein resides in the cytoplasm. The enzyme catalyses 2-(N(omega)-L-arginino)succinate = fumarate + L-arginine. It functions in the pathway amino-acid biosynthesis; L-arginine biosynthesis; L-arginine from L-ornithine and carbamoyl phosphate: step 3/3. The polypeptide is Argininosuccinate lyase (Rhodopseudomonas palustris (strain ATCC BAA-98 / CGA009)).